We begin with the raw amino-acid sequence, 356 residues long: NAC domain-containing protein JA2L (356 aa).

One can recognise an NAC domain in the interval 14–162 (LPPGFRFYPT…DWVLCRIYKK (149 aa)). The DNA-binding element occupies 111–168 (VGIKKALVFYIGKAPKGTKTNWIMHEYRLSEPTTKTGSSRLDDWVLCRIYKKNSGGQK). The disordered stretch occupies residues 163 to 191 (NSGGQKSSCSDLQNKDISHASSSSSSSQF). Residues 164–174 (SGGQKSSCSDL) show a composition bias toward polar residues.

Expressed in guard cells of the epidermis.

Its subcellular location is the nucleus. In terms of biological role, transcription factor that acts downstream of MYC2 in the jasmonate-mediated response to Botrytis cinerea infection. With MYC2 forms a transcription module that regulates wounding-responsive genes. Involved in jasmonate- and coronatine-mediated stomatal reopening in response to Pseudomonas syringae pv tomato DC3000 infection. Regulates the expression of threonine deaminase 2 (TD2) through promoter binding. The sequence is that of NAC domain-containing protein JA2L from Solanum lycopersicum (Tomato).